Reading from the N-terminus, the 90-residue chain is Protein A54 (90 aa).

The sequence is that of Protein A54 from Homo sapiens (Human).